The sequence spans 206 residues: MLFASNAIILKIKQRNSNSYIYTLYTYEEGLKEVIIFTNQKILCSNLKLYRIYFVLFKKGAPWDQIQRLYPLFFYPKIEQNPLKMIVLEYLSELIIYQLYSPENCTFIYFIFHYTLFQLNICSNNMILPIFISSLYSLLKFLGWEPELSNCVYTGESLNSENSNLTDSKIGFSASYGGIVKLNVLPKQEYIGFFNKDELFIFTNDN.

Its subcellular location is the plastid. The protein resides in the cyanelle. This is an uncharacterized protein from Cyanophora paradoxa.